A 205-amino-acid chain; its full sequence is Anaerobic dimethyl sulfoxide reductase chain B (205 aa).

3 consecutive 4Fe-4S ferredoxin-type domains span residues 5–33, 59–89, and 90–119; these read YGFFIDSSRCTGCKTCELACKDYKDLTPE, FAYYLSISCNHCEDPACTKVCPSGAMHKRED, and GFVVVDEDVCIGCRYCHMACPYGAPQYNET. [4Fe-4S] cluster-binding residues include cysteine 14, cysteine 17, cysteine 20, cysteine 24, cysteine 67, cysteine 70, cysteine 75, cysteine 79, cysteine 99, cysteine 102, cysteine 105, cysteine 109, cysteine 126, cysteine 129, cysteine 141, and cysteine 145. A disordered region spans residues 184 to 205; it reads KPNANSRPTGDTTGYLANPKEV. Polar residues predominate over residues 186–195; the sequence is NANSRPTGDT.

In terms of assembly, heterotrimeric enzyme composed of a catalytic heterodimer (DmsAB) and a membrane anchor protein (DmsC). Requires [4Fe-4S] cluster as cofactor.

Its function is as follows. Electron transfer subunit of the terminal reductase during anaerobic growth on various sulfoxide and N-oxide compounds. The polypeptide is Anaerobic dimethyl sulfoxide reductase chain B (dmsB) (Escherichia coli (strain K12)).